The chain runs to 141 residues: Small ribosomal subunit protein uS12 (141 aa).

The segment at 118–141 (TGVDKRRQQRSAYGAKRPKADKKK) is disordered.

It belongs to the universal ribosomal protein uS12 family. Part of the 30S ribosomal subunit. Contacts proteins S8 and S17. May interact with IF1 in the 30S initiation complex.

Functionally, with S4 and S5 plays an important role in translational accuracy. Interacts with and stabilizes bases of the 16S rRNA that are involved in tRNA selection in the A site and with the mRNA backbone. Located at the interface of the 30S and 50S subunits, it traverses the body of the 30S subunit contacting proteins on the other side and probably holding the rRNA structure together. The combined cluster of proteins S8, S12 and S17 appears to hold together the shoulder and platform of the 30S subunit. The sequence is that of Small ribosomal subunit protein uS12 from Mycoplasmoides gallisepticum (strain R(low / passage 15 / clone 2)) (Mycoplasma gallisepticum).